A 379-amino-acid chain; its full sequence is tRNA-specific 2-thiouridylase MnmA (379 aa).

ATP contacts are provided by residues 9-16 and Met-35; that span reads AMSGGVDS. The tract at residues 94-96 is interaction with target base in tRNA; it reads NPD. The active-site Nucleophile is the Cys-99. An intrachain disulfide couples Cys-99 to Cys-195. Gly-123 lines the ATP pocket. Positions 145 to 147 are interaction with tRNA; the sequence is KDQ. The active-site Cysteine persulfide intermediate is the Cys-195. The interval 307-308 is interaction with tRNA; that stretch reads RY.

It belongs to the MnmA/TRMU family.

It is found in the cytoplasm. It carries out the reaction S-sulfanyl-L-cysteinyl-[protein] + uridine(34) in tRNA + AH2 + ATP = 2-thiouridine(34) in tRNA + L-cysteinyl-[protein] + A + AMP + diphosphate + H(+). Its function is as follows. Catalyzes the 2-thiolation of uridine at the wobble position (U34) of tRNA, leading to the formation of s(2)U34. The protein is tRNA-specific 2-thiouridylase MnmA of Xylella fastidiosa (strain M23).